Reading from the N-terminus, the 307-residue chain is Cyclin-dependent kinase 5 activator 1 (307 aa).

Gly-2 is lipidated: N-myristoyl glycine. Ser-8 carries the post-translational modification Phosphoserine; by CDK5. The tract at residues 97–136 (TFAQPPPAQPPAPPASQLSGSQTGGSSSVKKAPHPAVTSA) is disordered. Over residues 100–110 (QPPPAQPPAPP) the composition is skewed to pro residues. Low complexity predominate over residues 111–124 (ASQLSGSQTGGSSS). Thr-138 bears the Phosphothreonine; by CDK5 mark.

It belongs to the cyclin-dependent kinase 5 activator family. Heterodimer composed of a catalytic subunit CDK5 and a regulatory subunit CDK5R1 (p25) and macromolecular complex composed of at least CDK5, CDK5R1 (p35) and CDK5RAP1 or CDK5RAP2 or CDK5RAP3. Only the heterodimer shows kinase activity. Interacts with EPHA4 and NGEF; may mediate the activation of NGEF by EPHA4. Interacts with RASGRF2. The complex p35/CDK5 interacts with CLOCK. Post-translationally, the p35 form is proteolytically cleaved by calpain, giving rise to the p25 form. P35 has a 5 to 10 fold shorter half-life compared to p25. The conversion results in deregulation of the CDK5 kinase: p25/CDK5 kinase displays an increased and altered tau phosphorylation in comparison to the p35/CDK5 kinase in vivo. Myristoylated. A proper myristoylation signal is essential for the proper distribution of p35. In terms of processing, ubiquitinated, leading to its degradation: degradation of p35 by proteasome results in down-regulation of CDK5 activity. During this process, CDK5 phosphorylates p35 and induces its ubiquitination and subsequent degradation. Ubiquitinated by the CRL2(FEM1B) complex, which recognizes the -Gly-Leu-Asp-Arg C-degron at the C-terminus, leading to its degradation. Post-translationally, phosphorylation at Ser-8 and Thr-138 by CDK5 prevents calpain-mediated proteolysis. As to expression, brain and neuron specific.

The protein resides in the cell membrane. Its subcellular location is the cell projection. The protein localises to the neuron projection. It is found in the nucleus. It localises to the cytoplasm. The protein resides in the perinuclear region. Its subcellular location is the perikaryon. In terms of biological role, p35 is a neuron specific activator of CDK5. The complex p35/CDK5 is required for neurite outgrowth and cortical lamination. Involved in dendritic spine morphogenesis by mediating the EFNA1-EPHA4 signaling. Activator of TPKII. The complex p35/CDK5 participates in the regulation of the circadian clock by modulating the function of CLOCK protein: phosphorylates CLOCK at 'Thr-451' and 'Thr-461' and regulates the transcriptional activity of the CLOCK-BMAL1 heterodimer in association with altered stability and subcellular distribution. In Homo sapiens (Human), this protein is Cyclin-dependent kinase 5 activator 1 (CDK5R1).